Reading from the N-terminus, the 953-residue chain is Ubiquitin carboxyl-terminal hydrolase CYLD (953 aa).

Residues 106–590 are interaction with TRIP; the sequence is CEERFSLFKN…FEIMIGKKKG (485 aa). CAP-Gly domains are found at residues 153–198 and 253–286; these read LAER…VFVA and DVLP…VQLC. Disordered regions lie at residues 313-349 and 384-410; these read PPKL…RNRS and SLTE…LSSE. Residues 337–346 show a composition bias toward polar residues; it reads TGSTSDPGTR. A phosphoserine mark is found at Ser384, Ser415, and Ser419. Positions 391-466 are interaction with TRAF2; that stretch reads DFGHASPPLQ…LAVSSGNSHG (76 aa). The interval 467–681 is interaction with IKBKG/NEMO; the sequence is LEVGSLAEVK…FTSEEKDPEE (215 aa). The CAP-Gly 3 domain maps to 489–532; that stretch reads GQPPGLNEVLAGLELEDECAGCTDGTFRGTRYFTCALKKALFVK. In terms of domain architecture, USP spans 589-947; the sequence is KGIQGHYNSC…DAYMCMYQSP (359 aa). The active-site Nucleophile is the Cys598. The B-box stretch occupies residues 778–830; sequence LEDTPRQCRICGGLAMYECRECYDDPDISAGKIKQFCKTCNAQVHLHPKRLNH. Cys785, Cys788, Cys796, Cys799, Cys814, Cys817, His822, and His830 together coordinate Zn(2+). Residue His868 is the Proton acceptor of the active site.

It belongs to the peptidase C19 family. As to quaternary structure, interacts (via CAP-Gly domain) with IKBKG/NEMO (via proline-rich C-terminal region). Interacts with TRAF2 and TRIP. Interacts with PLK1, DVL1, DVL3, MAVS, TBK1, IKKE and RIGI. Interacts (via CAP-Gly domain) with microtubules. Interacts with HDAC6 and BCL3. Interacts with MAP3K7. Identified in a complex with TRAF6 and SQSTM1. Interacts with OPTN and SQSTM1. Interacts with CEP350. Interacts with RNF31; the interaction is indirect and is mediated via SPATA2. Interacts with SPATA2 (via the PUB domain); the interaction is direct and recruits CYLD to the LUBAC complex, thereby regulating TNF-alpha-induced necroptosis. In terms of processing, phosphorylated on several serine residues by IKKA and/or IKKB in response to immune stimuli. Phosphorylation requires IKBKG. Phosphorylation abolishes TRAF2 deubiquitination, interferes with the activation of Jun kinases, and strongly reduces CD40-dependent gene activation by NF-kappa-B. Ubiquitinated. Polyubiquitinated in hepatocytes treated with palmitic acid. Ubiquitination is mediated by E3 ligase TRIM47 and leads to proteasomal degradation.

Its subcellular location is the cytoplasm. It is found in the perinuclear region. The protein localises to the cytoskeleton. It localises to the cell membrane. The protein resides in the microtubule organizing center. Its subcellular location is the centrosome. It is found in the spindle. The protein localises to the cilium basal body. It carries out the reaction Thiol-dependent hydrolysis of ester, thioester, amide, peptide and isopeptide bonds formed by the C-terminal Gly of ubiquitin (a 76-residue protein attached to proteins as an intracellular targeting signal).. In terms of biological role, deubiquitinase that specifically cleaves 'Lys-63'- and linear 'Met-1'-linked polyubiquitin chains and is involved in NF-kappa-B activation and TNF-alpha-induced necroptosis. Negatively regulates NF-kappa-B activation by deubiquitinating upstream signaling factors. Contributes to the regulation of cell survival, proliferation and differentiation via its effects on NF-kappa-B activation. Negative regulator of Wnt signaling. Inhibits HDAC6 and thereby promotes acetylation of alpha-tubulin and stabilization of microtubules. Plays a role in the regulation of microtubule dynamics, and thereby contributes to the regulation of cell proliferation, cell polarization, cell migration, and angiogenesis. Required for normal cell cycle progress and normal cytokinesis. Inhibits nuclear translocation of NF-kappa-B. Plays a role in the regulation of inflammation and the innate immune response, via its effects on NF-kappa-B activation. Dispensable for the maturation of intrathymic natural killer cells, but required for the continued survival of immature natural killer cells. Negatively regulates TNFRSF11A signaling and osteoclastogenesis. Involved in the regulation of ciliogenesis, allowing ciliary basal bodies to migrate and dock to the plasma membrane; this process does not depend on NF-kappa-B activation. Ability to remove linear ('Met-1'-linked) polyubiquitin chains regulates innate immunity and TNF-alpha-induced necroptosis: recruited to the LUBAC complex via interaction with SPATA2 and restricts linear polyubiquitin formation on target proteins. Regulates innate immunity by restricting linear polyubiquitin formation on RIPK2 in response to NOD2 stimulation. Involved in TNF-alpha-induced necroptosis by removing linear ('Met-1'-linked) polyubiquitin chains from RIPK1, thereby regulating the kinase activity of RIPK1. Negatively regulates intestinal inflammation by removing 'Lys-63' linked polyubiquitin chain of NLRP6, thereby reducing the interaction between NLRP6 and PYCARD/ASC and formation of the NLRP6 inflammasome. Does not catalyze deubiquitination of heterotypic 'Lys-63'-/'Lys-48'-linked branched ubiquitin chains. Removes 'Lys-63' linked polyubiquitin chain of MAP3K7, which inhibits phosphorylation and blocks downstream activation of the JNK-p38 kinase cascades. Also removes 'Lys-63'-linked polyubiquitin chains of MAP3K1 and MA3P3K3, which inhibit their interaction with MAP2K1 and MAP2K2. The protein is Ubiquitin carboxyl-terminal hydrolase CYLD (CYLD) of Bos taurus (Bovine).